Reading from the N-terminus, the 360-residue chain is Membrane-bound lytic murein transglycosylase C (360 aa).

The signal sequence occupies residues 1–16 (MKKLLALAVIAPLLIS). Cys17 carries the N-palmitoyl cysteine lipid modification. Cys17 carries S-diacylglycerol cysteine lipidation.

Belongs to the transglycosylase Slt family.

It is found in the cell outer membrane. The enzyme catalyses Exolytic cleavage of the (1-&gt;4)-beta-glycosidic linkage between N-acetylmuramic acid (MurNAc) and N-acetylglucosamine (GlcNAc) residues in peptidoglycan, from either the reducing or the non-reducing ends of the peptidoglycan chains, with concomitant formation of a 1,6-anhydrobond in the MurNAc residue.. Functionally, murein-degrading enzyme. May play a role in recycling of muropeptides during cell elongation and/or cell division. The polypeptide is Membrane-bound lytic murein transglycosylase C (Salmonella paratyphi A (strain ATCC 9150 / SARB42)).